The chain runs to 444 residues: Trigger factor (444 aa).

Residues 166–251 (GDQVVIDFEG…VHAVKAPKPA (86 aa)) form the PPIase FKBP-type domain.

The protein belongs to the FKBP-type PPIase family. Tig subfamily.

The protein resides in the cytoplasm. The enzyme catalyses [protein]-peptidylproline (omega=180) = [protein]-peptidylproline (omega=0). Its function is as follows. Involved in protein export. Acts as a chaperone by maintaining the newly synthesized protein in an open conformation. Functions as a peptidyl-prolyl cis-trans isomerase. This chain is Trigger factor (tig), found in Rhodobacter capsulatus (strain ATCC BAA-309 / NBRC 16581 / SB1003).